Reading from the N-terminus, the 915-residue chain is Probable dipeptidyl-aminopeptidase B (915 aa).

Positions 1 to 82 (MAPPFTDDPE…GAFLGPPGVP (82 aa)) are disordered. Over 1–94 (MAPPFTDDPE…RQPMDRGFRR (94 aa)) the chain is Cytoplasmic. A compositionally biased stretch (low complexity) spans 15–32 (STSRLSQDSLSSVSTTSL). The segment covering 36–62 (RIQEEMDRDPSASRSARRDLLPATKDE) has biased composition (basic and acidic residues). The helical; Signal-anchor for type II membrane protein transmembrane segment at 95–115 (ILIIIGAVFVGAWLAGLGIFV) threads the bilayer. Residues 116-915 (LSGSYKHESD…IDTKKRRHVS (800 aa)) lie on the Vacuolar side of the membrane. 2 N-linked (GlcNAc...) asparagine glycosylation sites follow: N355 and N577. The Charge relay system role is filled by S760. A glycan (N-linked (GlcNAc...) asparagine) is linked at N819. Catalysis depends on charge relay system residues D837 and H870.

This sequence belongs to the peptidase S9B family.

It localises to the vacuole membrane. It catalyses the reaction Release of an N-terminal dipeptide, Xaa-Yaa-|-Zaa-, from a polypeptide, preferentially when Yaa is Pro, provided Zaa is neither Pro nor hydroxyproline.. Type IV dipeptidyl-peptidase which removes N-terminal dipeptides sequentially from polypeptides having unsubstituted N-termini provided that the penultimate residue is proline. This chain is Probable dipeptidyl-aminopeptidase B (DAPB), found in Metarhizium robertsii (strain ARSEF 23 / ATCC MYA-3075) (Metarhizium anisopliae (strain ARSEF 23)).